The chain runs to 1398 residues: Pyrolysin (1398 aa).

Residues 1-26 (MNKKGLTVLFIAIMLLSVVPVHFVSA) form the signal peptide. Residues 27–149 (GTPPVSSENS…KTKEPSLEPK (123 aa)) constitute a propeptide that is removed on maturation. The N-linked (GlcNAc...) asparagine glycan is linked to Asn-152. Positions 154–656 (TWVINALQFI…HGLVNVTKSW (503 aa)) constitute a Peptidase S8 domain. Asp-179 functions as the Charge relay system in the catalytic mechanism. 7 N-linked (GlcNAc...) asparagine glycosylation sites follow: Asn-222, Asn-228, Asn-240, Asn-257, Asn-262, Asn-298, and Asn-327. His-365 serves as the catalytic Charge relay system. N-linked (GlcNAc...) asparagine glycosylation is present at Asn-406. The Charge relay system role is filled by Ser-590. N-linked (GlcNAc...) asparagine glycosylation is found at Asn-651, Asn-663, Asn-739, Asn-792, Asn-893, Asn-908, Asn-917, Asn-929, Asn-1048, Asn-1056, Asn-1084, Asn-1117, Asn-1133, Asn-1140, Asn-1148, Asn-1208, Asn-1233, Asn-1237, and Asn-1332.

The protein belongs to the peptidase S8 family. In terms of processing, LWM pyrolysin seems to be produced by autoproteolytic activation of HMW pyrolysin. Glycosylated.

The protein localises to the cell envelope. In terms of biological role, has endopeptidase activity toward caseins, casein fragments including alpha-S1-casein and synthetic peptides. This is Pyrolysin (pls) from Pyrococcus furiosus (strain ATCC 43587 / DSM 3638 / JCM 8422 / Vc1).